The following is a 337-amino-acid chain: Draxin (337 aa).

The first 24 residues, 1–24 (MLLLALLLLLELSLAGSLGPGSSA), serve as a signal peptide directing secretion. Disordered regions lie at residues 36-67 (GPALWTPQASHHRRRGLGKKERGPGTPGWTQD), 107-133 (RPYPEKETQAPGSERVKKRGREHKRRK), and 234-261 (WPSTRKKEKHRGKLSSDGNETSPAKGEP). 2 stretches are compositionally biased toward basic residues: residues 122–133 (VKKRGREHKRRK) and 237–246 (TRKKEKHRGK). A glycan (N-linked (GlcNAc...) asparagine) is linked at N252.

Belongs to the draxin family. In terms of assembly, interacts with LRP6.

It is found in the secreted. In terms of biological role, chemorepulsive axon guidance protein required for the development of spinal cord and forebrain commissures. Acts as a chemorepulsive guidance protein for commissural axons during development. Able to inhibit or repel neurite outgrowth from dorsal spinal cord. Inhibits the stabilization of cytosolic beta-catenin (CTNNB1) via its interaction with LRP6, thereby acting as an antagonist of Wnt signaling pathway. The sequence is that of Draxin from Bos taurus (Bovine).